The chain runs to 201 residues: dITP/XTP pyrophosphatase (201 aa).

A substrate-binding site is contributed by 8–13; that stretch reads TTNENK. The Proton acceptor role is filled by aspartate 68. Aspartate 68 serves as a coordination point for Mg(2+). Residues serine 69, 155–158, lysine 177, and 182–183 each bind substrate; these read FGYD and HR.

This sequence belongs to the HAM1 NTPase family. Homodimer. Requires Mg(2+) as cofactor.

It carries out the reaction XTP + H2O = XMP + diphosphate + H(+). The catalysed reaction is dITP + H2O = dIMP + diphosphate + H(+). It catalyses the reaction ITP + H2O = IMP + diphosphate + H(+). Its function is as follows. Pyrophosphatase that catalyzes the hydrolysis of nucleoside triphosphates to their monophosphate derivatives, with a high preference for the non-canonical purine nucleotides XTP (xanthosine triphosphate), dITP (deoxyinosine triphosphate) and ITP. Seems to function as a house-cleaning enzyme that removes non-canonical purine nucleotides from the nucleotide pool, thus preventing their incorporation into DNA/RNA and avoiding chromosomal lesions. In Borrelia garinii subsp. bavariensis (strain ATCC BAA-2496 / DSM 23469 / PBi) (Borreliella bavariensis), this protein is dITP/XTP pyrophosphatase.